A 291-amino-acid polypeptide reads, in one-letter code: MRIILITGISGSGKSVALNVLEDAGYYCVDNLPAQFIPELTRYLDAQGYTHLGVATDIRSRESLDQLPDTVRALAAEHQVEVIFLTASTDALVQRYSETRRRHPLSARTDGAAGGGAFNDTALMEAIEMERSLLSPLAEAAHRIDTSNVRTNTLRSWIKELIRDDSQRLTLLFESFGFKHGVPSDADMVFDVRSLPNPYYDLALRPLTGRDTPVIDFLQGQPMVLAMAEDIRAYVEKWLPSFIADNRSYLTVAIGCTGGQHRSVYIAERLANYFRAHGNVLVRHRELAPAG.

8-15 contributes to the ATP binding site; sequence GISGSGKS. GTP is bound at residue 57–60; sequence DIRS.

Belongs to the RapZ-like family.

Displays ATPase and GTPase activities. This is Nucleotide-binding protein RALTA_A0325 from Cupriavidus taiwanensis (strain DSM 17343 / BCRC 17206 / CCUG 44338 / CIP 107171 / LMG 19424 / R1) (Ralstonia taiwanensis (strain LMG 19424)).